Consider the following 289-residue polypeptide: Heme oxygenase 1 (289 aa).

Polar residues predominate over residues 1 to 12 (MERPQPDSSMPQ). The tract at residues 1-24 (MERPQPDSSMPQDLSEALKEATKE) is disordered. Residues 1-266 (MERPQPDSSM…KPQPSVLSQA (266 aa)) are Cytoplasmic-facing. Heme b contacts are provided by Lys19, His26, Tyr135, and Arg184. Residues 239-261 (RRAGSKVQDLAPTKASRGKPQPS) form a disordered region. At Ser243 the chain carries Phosphoserine. The helical; Anchor for type IV membrane protein transmembrane segment at 267 to 289 (PLLRWVLTLSFLVATVAVGLYAM) threads the bilayer.

Belongs to the heme oxygenase family. In terms of assembly, homodimer and higher order homooligomer. Oligomerization is crucial for its stability and function in the endoplasmic reticulum. Interacts with FLVCR2; this interaction is potentiated in the presence of heme. Post-translationally, a soluble form arises by proteolytic removal of the membrane anchor.

Its subcellular location is the endoplasmic reticulum membrane. The enzyme catalyses heme b + 3 reduced [NADPH--hemoprotein reductase] + 3 O2 = biliverdin IXalpha + CO + Fe(2+) + 3 oxidized [NADPH--hemoprotein reductase] + 3 H2O + H(+). With respect to regulation, inhibited by metalloporphyrins such as Sn-, Co-, Mn- and Zn-protoporphyrins. Its function is as follows. Catalyzes the oxidative cleavage of heme at the alpha-methene bridge carbon, released as carbon monoxide (CO), to generate biliverdin IXalpha, while releasing the central heme iron chelate as ferrous iron. Affords protection against programmed cell death and this cytoprotective effect relies on its ability to catabolize free heme and prevent it from sensitizing cells to undergo apoptosis. Functionally, catalyzes the oxidative cleavage of heme at the alpha-methene bridge carbon, released as carbon monoxide (CO), to generate biliverdin IXalpha, while releasing the central heme iron chelate as ferrous iron. In Bos taurus (Bovine), this protein is Heme oxygenase 1 (HMOX1).